The sequence spans 408 residues: tRNA(Met) cytidine acetate ligase (408 aa).

Residues I7 to H20, G102, N170, and R195 to I196 each bind ATP.

The protein belongs to the TmcAL family.

It localises to the cytoplasm. The enzyme catalyses cytidine(34) in elongator tRNA(Met) + acetate + ATP = N(4)-acetylcytidine(34) in elongator tRNA(Met) + AMP + diphosphate. In terms of biological role, catalyzes the formation of N(4)-acetylcytidine (ac(4)C) at the wobble position of elongator tRNA(Met), using acetate and ATP as substrates. First activates an acetate ion to form acetyladenylate (Ac-AMP) and then transfers the acetyl group to tRNA to form ac(4)C34. This is tRNA(Met) cytidine acetate ligase from Clostridium kluyveri (strain NBRC 12016).